Reading from the N-terminus, the 513-residue chain is MQLNSTEISELIKKRIAQFDVVSEAQSTGTIVSVSDGIIRIHGLADVMQGEMIELPGNRYAIALNLERDSVGAVVMGPYADLAEGMSVKCTGRILEVPVGRGLLGRVVNTLGQPIDGKGEIDNDGFSPVEVIAPGVIDRQSVDQPVQTGYKAVDSMVPIGRGQRELIIGDRQTGKTALAIDAIIAQKDSGIKCIYVAIGQKASTIANVVRKLEEHGALANTIVVVASASESAALQYLAPYSGCAMGEYFRDRGEDALIVYDDLSKQAVAYRQISLLLRRPPGREAFPGDVFYLHSRLLERAARVSADYVESFTNGAVKGQTGSLTALPIIETQAGDVSAFVPTNVISITDGQIFLESSLFNSGIRPAVNPGISVSRVGSAAQTKAIKKLSGGIRTALAQYRELAAFAQFASDLDDATRKQLSHGQKVTELLKQKQFAPMPVSEQALVLFAAEFGYLDDVELERIGSFESALLAYANSNHTDFMKNLAKSGDYNDSIKDQLKAIVEDFKKNGAW.

169–176 is a binding site for ATP; it reads GDRQTGKT.

Belongs to the ATPase alpha/beta chains family. F-type ATPases have 2 components, CF(1) - the catalytic core - and CF(0) - the membrane proton channel. CF(1) has five subunits: alpha(3), beta(3), gamma(1), delta(1), epsilon(1). CF(0) has three main subunits: a(1), b(2) and c(9-12). The alpha and beta chains form an alternating ring which encloses part of the gamma chain. CF(1) is attached to CF(0) by a central stalk formed by the gamma and epsilon chains, while a peripheral stalk is formed by the delta and b chains.

Its subcellular location is the cell inner membrane. The catalysed reaction is ATP + H2O + 4 H(+)(in) = ADP + phosphate + 5 H(+)(out). Functionally, produces ATP from ADP in the presence of a proton gradient across the membrane. The alpha chain is a regulatory subunit. The polypeptide is ATP synthase subunit alpha (Actinobacillus pleuropneumoniae serotype 7 (strain AP76)).